We begin with the raw amino-acid sequence, 199 residues long: uncharacterized protein (199 aa).

3 helical membrane passes run 27–47, 55–75, and 172–192; these read LIKITLVNLYLALTVPLPILA, LLTLLLTVGLMGGLVALVAAL, and LLLLLFTFLLWGSQLAIVLLL.

The protein localises to the cell membrane. This is an uncharacterized protein from Synechocystis sp. (strain ATCC 27184 / PCC 6803 / Kazusa).